The sequence spans 270 residues: MAHQMAAGNSLDSTCMPRIGPHVREMENCHSEKTCARIWKTVRDESTYGTDELIQVALVYKYVTRKTPEAFVLISNRLKGGKYDMNSVKKGYKAKDGLQEISNYISSLDREGKQVLACMLILSTQSIGKTVLVELLAGISGKHPMEVLPVHTNNIVMYDSDSEDEHRDLWLDEVAKQLNTLTPVLKGKYETAEEKEICGLVKQRIEDFRELEKLAAGSGREYDKRMYTKGLLKELCSILQGHQVIKLKGLTYQILVGVGEQLYQLLKSVD.

It localises to the virion. The sequence is that of Matrix protein 1 (M1) from Homo sapiens (Human).